The primary structure comprises 37 residues: Large ribosomal subunit protein bL36 (37 aa).

It belongs to the bacterial ribosomal protein bL36 family.

In Acidithiobacillus ferrooxidans (strain ATCC 23270 / DSM 14882 / CIP 104768 / NCIMB 8455) (Ferrobacillus ferrooxidans (strain ATCC 23270)), this protein is Large ribosomal subunit protein bL36.